Consider the following 276-residue polypeptide: Orotidine 5'-phosphate decarboxylase (276 aa).

Lys-95 acts as the Proton donor in catalysis.

It belongs to the OMP decarboxylase family. Type 2 subfamily.

The catalysed reaction is orotidine 5'-phosphate + H(+) = UMP + CO2. It participates in pyrimidine metabolism; UMP biosynthesis via de novo pathway; UMP from orotate: step 2/2. The polypeptide is Orotidine 5'-phosphate decarboxylase (pyrF) (Mycolicibacterium smegmatis (strain ATCC 700084 / mc(2)155) (Mycobacterium smegmatis)).